Reading from the N-terminus, the 504-residue chain is Maturase K (504 aa).

The protein belongs to the intron maturase 2 family. MatK subfamily.

The protein localises to the plastid. The protein resides in the chloroplast. Its function is as follows. Usually encoded in the trnK tRNA gene intron. Probably assists in splicing its own and other chloroplast group II introns. This Lupinus argenteus (Silvery lupine) protein is Maturase K.